Reading from the N-terminus, the 651-residue chain is Probable potassium transport system protein Kup (651 aa).

A run of 12 helical transmembrane segments spans residues 41 to 61 (LVLG…IYAF), 82 to 102 (VVSL…VLFV), 130 to 150 (LILG…VITP), 163 to 183 (IVAP…LVTL), 194 to 214 (VAIV…ASGL), 235 to 255 (FLMI…LAMT), 276 to 296 (WLWI…AFIL), 309 to 329 (MMPS…TVIA), 366 to 386 (IYIP…VLGF), 395 to 415 (AYGI…YIVM), 426 to 446 (ALPI…ANII), and 450 to 470 (EGGW…WTWV).

Belongs to the HAK/KUP transporter (TC 2.A.72) family.

It localises to the cell inner membrane. It catalyses the reaction K(+)(in) + H(+)(in) = K(+)(out) + H(+)(out). In terms of biological role, transport of potassium into the cell. Likely operates as a K(+):H(+) symporter. The polypeptide is Probable potassium transport system protein Kup (Brucella anthropi (strain ATCC 49188 / DSM 6882 / CCUG 24695 / JCM 21032 / LMG 3331 / NBRC 15819 / NCTC 12168 / Alc 37) (Ochrobactrum anthropi)).